A 486-amino-acid polypeptide reads, in one-letter code: UDP-N-acetylmuramate--L-alanine ligase (486 aa).

132–138 (GTHGKTT) is an ATP binding site.

This sequence belongs to the MurCDEF family.

It localises to the cytoplasm. The catalysed reaction is UDP-N-acetyl-alpha-D-muramate + L-alanine + ATP = UDP-N-acetyl-alpha-D-muramoyl-L-alanine + ADP + phosphate + H(+). It participates in cell wall biogenesis; peptidoglycan biosynthesis. Its function is as follows. Cell wall formation. This Halorhodospira halophila (strain DSM 244 / SL1) (Ectothiorhodospira halophila (strain DSM 244 / SL1)) protein is UDP-N-acetylmuramate--L-alanine ligase.